Consider the following 1439-residue polypeptide: Myomesin-3 (1439 aa).

Positions 1-57 are disordered; sequence MTLPHSPGSAGEPQASQTVQVHRLEHRQEEEQKEERQHSLQMGSSVQRRTYRSSEEE. The segment covering 22 to 38 has biased composition (basic and acidic residues); it reads HRLEHRQEEEQKEERQH. The segment covering 39 to 48 has biased composition (polar residues); it reads SLQMGSSVQR. Residues 119-149 are a coiled coil; the sequence is QRLLRQRRDWKALRQRTEEKVREAKELIELC. 2 Ig-like C2-type domains span residues 154-246 and 269-362; these read PWFW…AKVL and PSAE…AYVF. Fibronectin type-III domains lie at 376–471, 504–599, 605–698, 704–799, and 806–901; these read SPLN…TGDY, APTN…LKGK, PPAQ…VKQA, APYD…CKEW, and PPYD…LEDK. Ig-like C2-type domains follow at residues 1122-1207 and 1336-1425; these read PYFQ…LDLT and AKVV…VTIS.

Homodimer. In terms of tissue distribution, mainly expressed in slow muscle, extraocular muscle and embryonic/neonatal skeletal muscle (at protein level). Expression in skeletal muscle is fiber type specific, with the highest levels in type IIA fibers (intermediate speed) and lower levels in type I fibers.

Its subcellular location is the cytoplasm. It localises to the myofibril. The protein localises to the sarcomere. It is found in the m line. Its function is as follows. May link the intermediate filament cytoskeleton to the M-disk of the myofibrils in striated muscle. This Mus musculus (Mouse) protein is Myomesin-3 (Myom3).